A 252-amino-acid chain; its full sequence is Centriole, cilia and spindle-associated protein (252 aa).

Methionine 1 carries the N-acetylmethionine modification. An ST]-E-Y-X(3)-Y motif 1; required for efficient microtubule binding and stabilization motif is present at residues 9–15 (SEYMKRY). The interval 49–163 (WDAWGPDSPS…RSTSKIKENK (115 aa)) is disordered. Over residues 54–64 (PDSPSDSSASP) the composition is skewed to low complexity. Position 65 is a phosphoserine (serine 65). Over residues 108–125 (PKKDTEEKPEEHKTKETD) the composition is skewed to basic and acidic residues. Serine 191 is modified (phosphoserine). Residues 242–248 (TEYMRCY) carry the ST]-E-Y-X(3)-Y motif 2; required for efficient microtubule binding and stabilization motif.

The protein belongs to the CCSAP family. As to quaternary structure, associates with microtubules; the association occurs on polyglutamylated tubulin.

The protein resides in the cytoplasm. It is found in the cytoskeleton. Its subcellular location is the microtubule organizing center. The protein localises to the centrosome. It localises to the centriole. The protein resides in the spindle. It is found in the cilium basal body. Its subcellular location is the cilium axoneme. The protein localises to the cell projection. It localises to the axon. The protein resides in the cilium. Plays a role in microtubule (MT) stabilization and this stabilization involves the maintenance of NUMA1 at the spindle poles. Colocalizes with polyglutamylated MTs to promote MT stabilization and regulate bipolar spindle formation in mitosis. Binding of CCSAP to centrosomes and the spindle around centrosomes during mitosis inhibits MT depolymerization, thereby stabilizing the mitotic spindle. May play a role in embryonic development. May be required for proper cilia beating. In Mus musculus (Mouse), this protein is Centriole, cilia and spindle-associated protein (Ccsap).